The primary structure comprises 395 residues: Type III polyketide synthase A (395 aa).

Residue Lys63–Thr70 coordinates CoA. The active-site Nucleophile is Cys172. Gly224–Asp225 is a substrate binding site. CoA is bound by residues Leu274, Gly314–Ala317, and Ala317.

It belongs to the thiolase-like superfamily. Chalcone/stilbene synthases family. In terms of assembly, homodimer. Interacts with 4CLL1/ACOS5 and TKPR1. As to expression, expressed in flowers and flower buds (at protein level), and, at very low levels, in roots, seedlings, leaves and stems. Mostly confined to anther tapetal cells.

Its subcellular location is the endoplasmic reticulum. The protein operates within secondary metabolite biosynthesis; flavonoid biosynthesis. In terms of biological role, plant type III polyketide synthases (PKSs) that catalyzes the condensation of malonyl-CoA units with various CoA ester starter molecules to generate a diverse array of natural products including long-chain alkyl alpha-pyrones. Accepts up to C(20) chain-length fatty acyl CoAs as starter substrates, and carries out sequential condensations with malonyl-CoA to produce triketide and tetraketide alpha-pyrones, potential sporopollenin precursors. Favorite substrates for are midchain- and v-hydroxylated fatty acyl-CoAs (e.g. 12-hydroxyoctadecanoyl-CoA and 16-hydroxyhexadecanoyl-CoA). Required for pollen development and sporopollenin biosynthesis, the major constituent of exine in the outer pollen wall. In vitro, can use 4-coumaroyl-coenzyme A as substrate to produce bis-noryangonin and fatty acyl-coenzyme A as substrate to produce medium-chain alkyl pyrones. May play a role in both the synthesis of pollen fatty acids and phenolics found in exine. The chain is Type III polyketide synthase A from Arabidopsis thaliana (Mouse-ear cress).